The following is a 760-amino-acid chain: 5-methyltetrahydropteroyltriglutamate--homocysteine methyltransferase (760 aa).

Residues 17–20 and Lys118 each bind 5-methyltetrahydropteroyltri-L-glutamate; that span reads RELK. L-homocysteine-binding positions include 436 to 438 and Glu489; that span reads IGS. Residues 436 to 438 and Glu489 each bind L-methionine; that span reads IGS. Residues 520–521 and Trp566 each bind 5-methyltetrahydropteroyltri-L-glutamate; that span reads RC. Asp604 is a binding site for L-homocysteine. Asp604 contacts L-methionine. Residue Glu610 coordinates 5-methyltetrahydropteroyltri-L-glutamate. 3 residues coordinate Zn(2+): His646, Cys648, and Glu670. Residue His699 is the Proton donor of the active site. Cys731 provides a ligand contact to Zn(2+).

It belongs to the vitamin-B12 independent methionine synthase family. The cofactor is Zn(2+).

It catalyses the reaction 5-methyltetrahydropteroyltri-L-glutamate + L-homocysteine = tetrahydropteroyltri-L-glutamate + L-methionine. The protein operates within amino-acid biosynthesis; L-methionine biosynthesis via de novo pathway; L-methionine from L-homocysteine (MetE route): step 1/1. Catalyzes the transfer of a methyl group from 5-methyltetrahydrofolate to homocysteine resulting in methionine formation. This is 5-methyltetrahydropteroyltriglutamate--homocysteine methyltransferase from Vibrio harveyi (Beneckea harveyi).